We begin with the raw amino-acid sequence, 233 residues long: Zinc import ATP-binding protein ZnuC (233 aa).

An ABC transporter domain is found at 6 to 222 (IEFRNVSKKF…SEFSNALSSL (217 aa)). 38 to 45 (GPNGAGKT) is a binding site for ATP.

The protein belongs to the ABC transporter superfamily. Zinc importer (TC 3.A.1.15.5) family. As to quaternary structure, the complex is composed of two ATP-binding proteins (ZnuC), two transmembrane proteins (ZnuB) and a solute-binding protein (ZnuA).

It is found in the cell inner membrane. It catalyses the reaction Zn(2+)(out) + ATP(in) + H2O(in) = Zn(2+)(in) + ADP(in) + phosphate(in) + H(+)(in). Its function is as follows. Part of the ABC transporter complex ZnuABC involved in zinc import. Responsible for energy coupling to the transport system. The polypeptide is Zinc import ATP-binding protein ZnuC (Rickettsia prowazekii (strain Madrid E)).